Reading from the N-terminus, the 103-residue chain is Cystatin-A8 (103 aa).

The segment at 1-20 is disordered; it reads MESEEMLAGGLTEPRPATPE. The short motif at 51-55 is the Secondary area of contact element; it reads QVVAG.

Belongs to the cystatin family.

Its subcellular location is the cytoplasm. In terms of biological role, this is an intracellular thiol proteinase inhibitor. The polypeptide is Cystatin-A8 (Sus scrofa (Pig)).